The following is a 212-amino-acid chain: Ropporin-1A (212 aa).

The RIIa domain maps to Pro12–Thr49. Phosphoserine is present on Ser56. The interval Val209 to Glu212 is interaction with RHPN1.

Belongs to the ropporin family. In terms of assembly, homodimer. Interacts with AKAP3 and RHPN1. May interact with SPA17. Interacts with FSCB; the interaction increases upon spermatozoa capacitation conditions. Interacts with CFAP61. In terms of processing, sumoylated, sumoylation decreases upon spermatozoa capacitation conditions. As to expression, testis specific in adult. Overexpressed in hematologic tumor cells.

It localises to the cell projection. It is found in the cilium. Its subcellular location is the flagellum. In terms of biological role, important for male fertility. With ROPN1L, involved in fibrous sheath integrity and sperm motility, plays a role in PKA-dependent signaling processes required for spermatozoa capacitation. The protein is Ropporin-1A (ROPN1) of Homo sapiens (Human).